Reading from the N-terminus, the 145-residue chain is Ribonuclease H (145 aa).

The RNase H type-1 domain maps to 2–143 (SKKEVAIYTD…ADSLARKAII (142 aa)). Aspartate 11, glutamate 49, aspartate 71, and aspartate 135 together coordinate Mg(2+).

It belongs to the RNase H family. In terms of assembly, monomer. Mg(2+) is required as a cofactor.

Its subcellular location is the cytoplasm. It catalyses the reaction Endonucleolytic cleavage to 5'-phosphomonoester.. In terms of biological role, endonuclease that specifically degrades the RNA of RNA-DNA hybrids. This is Ribonuclease H from Wolbachia sp. subsp. Drosophila simulans (strain wRi).